Reading from the N-terminus, the 254-residue chain is Cell wall biogenesis protein NCW2 (254 aa).

The first 17 residues, 1–17 (MKACSILFTTLITLAAA), serve as a signal peptide directing secretion. 3 disordered regions span residues 19–57 (KDSG…SAST), 111–143 (TSTA…DGPV), and 167–191 (ATTD…SSTK). A compositionally biased stretch (low complexity) spans 27-42 (QNSEDSSQKESSNSQE). Residues 43–57 (ITPTTTKEAQESAST) are compositionally biased toward polar residues. Low complexity predominate over residues 111-139 (TSTASVQPTGETSSGITNSASSSTTSTST). The N-linked (GlcNAc...) asparagine glycan is linked to asparagine 229. Asparagine 232 carries GPI-anchor amidated asparagine lipidation. The propeptide at 233 to 254 (GAFAGTHIAYGAGAFAVGALLL) is removed in mature form.

Its subcellular location is the cell membrane. In terms of biological role, cell wall biogenesis protein that participates in the organization of the beta-glucan assembly. Involved in the mechanism responsible for cell tolerance to polyhexamethylene biguanide (PHMB), an antifungal agent. In Saccharomyces cerevisiae (strain ATCC 204508 / S288c) (Baker's yeast), this protein is Cell wall biogenesis protein NCW2.